The chain runs to 789 residues: Protein translocase subunit SecA (789 aa).

Residues glutamine 85, 103 to 107, and aspartate 492 contribute to the ATP site; that span reads GEGKT.

Belongs to the SecA family. Monomer and homodimer. Part of the essential Sec protein translocation apparatus which comprises SecA, SecYEG and auxiliary proteins SecDF. Other proteins may also be involved.

It localises to the cell membrane. Its subcellular location is the cytoplasm. The catalysed reaction is ATP + H2O + cellular proteinSide 1 = ADP + phosphate + cellular proteinSide 2.. Functionally, part of the Sec protein translocase complex. Interacts with the SecYEG preprotein conducting channel. Has a central role in coupling the hydrolysis of ATP to the transfer of proteins into and across the cell membrane, serving as an ATP-driven molecular motor driving the stepwise translocation of polypeptide chains across the membrane. This Limosilactobacillus fermentum (strain NBRC 3956 / LMG 18251) (Lactobacillus fermentum) protein is Protein translocase subunit SecA.